The chain runs to 308 residues: Nuclear transcription factor Y subunit A-5 (308 aa).

Positions 1-10 (MQVFQRKEDS) are enriched in basic and acidic residues. 2 disordered regions span residues 1–26 (MQVFQRKEDSSWGNSMPTTNSNIQGS) and 49–71 (GLQLQNQDSTSSQSTEEESGGGE). A compositionally biased stretch (polar residues) spans 11–26 (SWGNSMPTTNSNIQGS). Positions 181 to 204 (FVNAKQYHAILRRRKHRAKLEAQN) match the Subunit association domain (SAD) motif. The NFYA/HAP2-type DNA-binding region spans 211-236 (KPYLHESRHLHALKRARGSGGRFLNT). The tract at residues 251–273 (MANGQNFSMSPHGGGSGIGSSSI) is disordered.

This sequence belongs to the NFYA/HAP2 subunit family. Heterotrimeric transcription factor composed of three components, NF-YA, NF-YB and NF-YC. NF-YB and NF-YC must interact and dimerize for NF-YA association and DNA binding. As to expression, expressed in the whole plant, except roots. Present in etiolated seedlings.

The protein localises to the nucleus. Functionally, stimulates the transcription of various genes by recognizing and binding to a CCAAT motif in promoters. Involved in the blue light (BL) and abscisic acid (ABA) signaling pathways. This Arabidopsis thaliana (Mouse-ear cress) protein is Nuclear transcription factor Y subunit A-5 (NFYA5).